The sequence spans 185 residues: Ribosome-recycling factor (185 aa).

The protein belongs to the RRF family.

It localises to the cytoplasm. Functionally, responsible for the release of ribosomes from messenger RNA at the termination of protein biosynthesis. May increase the efficiency of translation by recycling ribosomes from one round of translation to another. This is Ribosome-recycling factor from Aeromonas hydrophila subsp. hydrophila (strain ATCC 7966 / DSM 30187 / BCRC 13018 / CCUG 14551 / JCM 1027 / KCTC 2358 / NCIMB 9240 / NCTC 8049).